The chain runs to 283 residues: Shikimate kinase (283 aa).

86-96 contacts ATP; the sequence is PLKSGLSSSSA.

The protein belongs to the GHMP kinase family. Archaeal shikimate kinase subfamily.

The protein resides in the cytoplasm. It catalyses the reaction shikimate + ATP = 3-phosphoshikimate + ADP + H(+). Its pathway is metabolic intermediate biosynthesis; chorismate biosynthesis; chorismate from D-erythrose 4-phosphate and phosphoenolpyruvate: step 5/7. This is Shikimate kinase from Methanococcus vannielii (strain ATCC 35089 / DSM 1224 / JCM 13029 / OCM 148 / SB).